A 549-amino-acid chain; its full sequence is Probable protein kinase UbiB (549 aa).

One can recognise a Protein kinase domain in the interval 123-501 (DFNETPLASA…QQQAHKSNYL (379 aa)). Residues 129–137 (LASASISQV) and Lys152 contribute to the ATP site. Asp287 serves as the catalytic Proton acceptor. Transmembrane regions (helical) follow at residues 498 to 518 (SNYL…LFNQ) and 520 to 540 (ATLL…IIGW).

It belongs to the ABC1 family. UbiB subfamily.

It localises to the cell inner membrane. It functions in the pathway cofactor biosynthesis; ubiquinone biosynthesis [regulation]. Is probably a protein kinase regulator of UbiI activity which is involved in aerobic coenzyme Q (ubiquinone) biosynthesis. The protein is Probable protein kinase UbiB of Shewanella oneidensis (strain ATCC 700550 / JCM 31522 / CIP 106686 / LMG 19005 / NCIMB 14063 / MR-1).